Here is a 299-residue protein sequence, read N- to C-terminus: uncharacterized protein (299 aa).

6 consecutive transmembrane segments (helical) span residues 32–52 (FILL…YLHL), 56–76 (SMII…SILY), 199–219 (LAIG…LLGA), 220–240 (YLIA…VKPE), 246–266 (FEIV…PIFG), and 273–293 (FLIS…ILKF).

Its subcellular location is the cell membrane. This is an uncharacterized protein from Methanocaldococcus jannaschii (strain ATCC 43067 / DSM 2661 / JAL-1 / JCM 10045 / NBRC 100440) (Methanococcus jannaschii).